Reading from the N-terminus, the 639-residue chain is MGFEASYDVIVVGGGHAGTEAALASARAGARTLLLTHNIETIGQMSCNPAIGGIGKGHLVKEIDALGGLMARAADRGGIHFRTLNSRKGPAVRATRAQADRVRYKAAVRSVVENTPHLFLFQQAVDDLIVEGERVAGVITQTGLRFRSPAVVLTVGTFLGGRIHVGEVQHAGGRAGDPPSIALAARLRELAPRVGRLKTGTPPRIDGRSIDYAQLTEQPGDAPRPVFSFIGARDEHPPQVSCWIARTTEHTHAIIRGALHRSPMYSGAIEGVGPRYCPSIEDKVVRFADKDSHQVFIEPEGLDTHEVYPNGISTSLPFDVQFELVRSIPGFEQAHITRPGYAIEYDYFDPRDLKPSLETRCLAGLFFAGQINGTTGYEEAAAQGLVAGLNAARSVRDLAPWCPRRDEAYIGVLIDDLITRGTAEPYRMFTSRAEYRLMLREDNADLRLTPLGRDMGLVDDARWAAFCTKREAVERETQRLAATRLDPERVDREAAERVIGGAFSREQNLLDLLRRPEVDYAALMGLEGAGPGVEDPRVAEQVEIGAKYAGYIQRQQDEVARQQRHENLALPEGLDYAAITGLSMEVRQKLAAHRPHTLGQAARIPGVTPAAVSLLLVHVKRQGGNGPQSPRPDDGRARA.

Residues 13–18, valine 125, and serine 180 each bind FAD; that span reads GGGHAG. 273–287 contacts NAD(+); sequence GPRYCPSIEDKVVRF. Glutamine 370 provides a ligand contact to FAD. A disordered region spans residues 620-639; sequence KRQGGNGPQSPRPDDGRARA.

It belongs to the MnmG family. As to quaternary structure, homodimer. Heterotetramer of two MnmE and two MnmG subunits. The cofactor is FAD.

The protein localises to the cytoplasm. In terms of biological role, NAD-binding protein involved in the addition of a carboxymethylaminomethyl (cmnm) group at the wobble position (U34) of certain tRNAs, forming tRNA-cmnm(5)s(2)U34. The chain is tRNA uridine 5-carboxymethylaminomethyl modification enzyme MnmG from Thioalkalivibrio sulfidiphilus (strain HL-EbGR7).